A 359-amino-acid polypeptide reads, in one-letter code: Mitochondrial glutathione transporter SLC25A39 (359 aa).

The Mitochondrial intermembrane segment spans residues 1–18 (MGDRPAVRISAAITPVQQ). 3 Solcar repeats span residues 13–149 (ITPV…LRDF), 157–241 (HGDH…VKAQ), and 251–346 (ASFT…GKTF). A helical transmembrane segment spans residues 19-39 (MLASGTGAVLTSLFVTPLDVV). At 40–119 (KIRLQAQQTP…VKITHNEGLR (80 aa)) the chain is on the mitochondrial matrix side. Residues Cys72, Cys76, Cys86, and Cys92 each contribute to the [2Fe-2S] cluster site. A helical membrane pass occupies residues 120-140 (SLWSGLPPTLVMAVPATVIYF). The Mitochondrial intermembrane portion of the chain corresponds to 141-162 (TCYDQLRDFLCYSMGYHGDHIP). The chain crosses the membrane as a helical span at residues 163–183 (LIAGGLARLGAVSVISPLELV). The Mitochondrial matrix portion of the chain corresponds to 184-212 (RTKMQSRRLQYSELMVCIRSSVAQDGWLS). A helical membrane pass occupies residues 213 to 233 (LWRGWGPTVLRDVPFSALYWF). The Mitochondrial intermembrane portion of the chain corresponds to 234-253 (NYELVKAQLCEHYRTPQASF). Residues 254–274 (TISFTAGAVSGAIAAVLTLPF) form a helical membrane-spanning segment. Residues 275–316 (DVVKTRRQIQLGEMEALGAVSMKKPSSTWNMMRNIWIDMGYK) are Mitochondrial matrix-facing. The helical transmembrane segment at 317–337 (GLFAGFLPRVIKVAPACAVMI) threads the bilayer. The Mitochondrial intermembrane portion of the chain corresponds to 338–359 (STYEFGKTFFQERNLHQARCGL).

This sequence belongs to the mitochondrial carrier (TC 2.A.29) family. In terms of processing, cleaved and degraded by AFG3L2; degradation by AFG3L2 is regulated by the ability of SLC25A39 to bind iron-sulfur. In absence of mitochondrial glutathione, SLC25A39 binds iron-sulfur, preventing cleavage and degradation by AFG3L2. The presence of mitochondrial glutathione prevents iron-sulfur-binding to SLC25A39, promoting cleavage and degradation by AFG3L2.

The protein localises to the mitochondrion inner membrane. It catalyses the reaction glutathione(in) = glutathione(out). Its activity is regulated as follows. The activity of SLC25A39 is regulated by levels of mitochondrial glutathione via its ability to bind [2Fe-2S] iron-sulfur cluster. Upon physiological levels of mitochondrial glutathione, glutathione prevents iron-sulfur-binding to SLC25A39 promoting cleavage and degradation by AFG3L2. Upon depletion of mitochondrial glutathione, SLC25A39 binds iron-sulfur, preventing cleavage and degradation by AFG3L2. Mitochondrial transporter required for glutathione import into mitochondria. Glutathione, which plays key roles in oxidative metabolism, is produced exclusively in the cytosol and is imported in many organelles. Mitochondrial glutathione is required for the activity and stability of proteins containing iron-sulfur clusters, as well as erythropoiesis. Involved in the early steps of heme biosynthesis. In Danio rerio (Zebrafish), this protein is Mitochondrial glutathione transporter SLC25A39 (slc25a39).